Reading from the N-terminus, the 490-residue chain is Betaine aldehyde dehydrogenase (490 aa).

Ser26, Ile27, and Asp93 together coordinate K(+). Residue 150–152 participates in NAD(+) binding; it reads GAW. Lys162 (charge relay system) is an active-site residue. 176–179 lines the NAD(+) pocket; sequence KPSE. A K(+)-binding site is contributed by Val180. 230–233 serves as a coordination point for NAD(+); that stretch reads GTDT. K(+) is bound at residue Leu246. Glu252 acts as the Proton acceptor in catalysis. Gly254, Cys286, and Glu387 together coordinate NAD(+). The active-site Nucleophile is Cys286. At Cys286 the chain carries Cysteine sulfenic acid (-SOH). Residues Lys457 and Gly460 each contribute to the K(+) site. Glu464 functions as the Charge relay system in the catalytic mechanism.

The protein belongs to the aldehyde dehydrogenase family. In terms of assembly, dimer of dimers. It depends on K(+) as a cofactor.

It catalyses the reaction betaine aldehyde + NAD(+) + H2O = glycine betaine + NADH + 2 H(+). It participates in amine and polyamine biosynthesis; betaine biosynthesis via choline pathway; betaine from betaine aldehyde: step 1/1. Functionally, involved in the biosynthesis of the osmoprotectant glycine betaine. Catalyzes the irreversible oxidation of betaine aldehyde to the corresponding acid. The chain is Betaine aldehyde dehydrogenase from Pseudomonas syringae pv. tomato (strain ATCC BAA-871 / DC3000).